A 118-amino-acid polypeptide reads, in one-letter code: UPF0102 protein Bcav_2532 (118 aa).

The protein belongs to the UPF0102 family.

In Beutenbergia cavernae (strain ATCC BAA-8 / DSM 12333 / CCUG 43141 / JCM 11478 / NBRC 16432 / NCIMB 13614 / HKI 0122), this protein is UPF0102 protein Bcav_2532.